We begin with the raw amino-acid sequence, 310 residues long: L-lactate dehydrogenase (310 aa).

Residues 10 to 11 (MV), aspartate 32, tyrosine 62, and 76 to 77 (GV) contribute to the NAD(+) site. Residues glutamine 79, arginine 85, and 117-120 (NPVD) each bind substrate. NAD(+)-binding positions include 115–117 (ATN) and serine 140. Position 145–148 (145–148 (DTAR)) interacts with substrate. Residues arginine 150 and 162 to 167 (QSVHAY) contribute to the beta-D-fructose 1,6-bisphosphate site. The Proton acceptor role is filled by histidine 172. The residue at position 218 (tyrosine 218) is a Phosphotyrosine. Residue threonine 227 coordinates substrate.

This sequence belongs to the LDH/MDH superfamily. LDH family. In terms of assembly, homotetramer.

The protein resides in the cytoplasm. The enzyme catalyses (S)-lactate + NAD(+) = pyruvate + NADH + H(+). Its pathway is fermentation; pyruvate fermentation to lactate; (S)-lactate from pyruvate: step 1/1. Allosterically activated by fructose 1,6-bisphosphate (FBP). It binds two fructose 1,6-bisphosphate (FBP) molecules per tetramer. In terms of biological role, catalyzes the conversion of lactate to pyruvate. In Thermus caldophilus, this protein is L-lactate dehydrogenase.